Here is a 670-residue protein sequence, read N- to C-terminus: DNA-binding transcriptional activator HyfR (670 aa).

One can recognise a GAF domain in the interval 169 to 311; that stretch reads DLDDLIADVA…HIADRIAIAV (143 aa). The Cys-rich segment, might bind a metal cluster motif lies at 207-221; the sequence is CSDLSASHCACLPRC. One can recognise a Sigma-54 factor interaction domain in the interval 347 to 576; the sequence is IIYQSQAMED…LENVIERAVL (230 aa). Residues 375–382 and 438–447 contribute to the ATP site; these read GETGTGKE and ADGGTLFLDE. Positions 641–660 form a DNA-binding region, H-T-H motif; the sequence is PRGAATRLGMKRTTLLSRMQ.

A transcriptional activator of its own operon; when overexpressed operon expression is strongly enhanced by low pH (under pH 6.0), strongly inhibited by O(2) but only weakly stimulated by fumarate. Expression in situ is very weak. This Escherichia coli (strain K12) protein is DNA-binding transcriptional activator HyfR.